An 850-amino-acid chain; its full sequence is Serine/threonine-protein phosphatase 6 regulatory subunit 3-B (850 aa).

3 disordered regions span residues 610–652 (NISY…VNHE), 683–778 (SDGS…MKET), and 793–850 (KSEE…NGPV). Residues 627–638 (DSEESTDSEEEE) are compositionally biased toward acidic residues. Composition is skewed to polar residues over residues 703–731 (ASFS…TSTE) and 764–778 (DQMT…MKET). The segment covering 826 to 839 (PSSSSQEQRISEQI) has biased composition (low complexity).

This sequence belongs to the SAPS family.

Its function is as follows. Regulatory subunit of protein phosphatase 6 (PP6). May function as a scaffolding PP6 subunit. The polypeptide is Serine/threonine-protein phosphatase 6 regulatory subunit 3-B (ppp6r3-b) (Xenopus laevis (African clawed frog)).